The primary structure comprises 156 residues: ATP synthase subunit b (156 aa).

A helical membrane pass occupies residues 7–27; sequence LFVQAIVFLILVWFTMQFVWP.

This sequence belongs to the ATPase B chain family. F-type ATPases have 2 components, F(1) - the catalytic core - and F(0) - the membrane proton channel. F(1) has five subunits: alpha(3), beta(3), gamma(1), delta(1), epsilon(1). F(0) has three main subunits: a(1), b(2) and c(10-14). The alpha and beta chains form an alternating ring which encloses part of the gamma chain. F(1) is attached to F(0) by a central stalk formed by the gamma and epsilon chains, while a peripheral stalk is formed by the delta and b chains.

It localises to the cell inner membrane. F(1)F(0) ATP synthase produces ATP from ADP in the presence of a proton or sodium gradient. F-type ATPases consist of two structural domains, F(1) containing the extramembraneous catalytic core and F(0) containing the membrane proton channel, linked together by a central stalk and a peripheral stalk. During catalysis, ATP synthesis in the catalytic domain of F(1) is coupled via a rotary mechanism of the central stalk subunits to proton translocation. Functionally, component of the F(0) channel, it forms part of the peripheral stalk, linking F(1) to F(0). The sequence is that of ATP synthase subunit b from Verminephrobacter eiseniae (strain EF01-2).